The primary structure comprises 206 residues: Large ribosomal subunit protein mL62 (206 aa).

Residues 1–29 (MATAWCLPWTLRRAGAWLLTPPLRCPRRA) constitute a mitochondrion transit peptide.

It belongs to the prokaryotic/mitochondrial release factor family. Mitochondrion-specific ribosomal protein mL62 subfamily. As to quaternary structure, component of the mitochondrial 39S ribosomal subunit.

The protein resides in the mitochondrion. The enzyme catalyses an N-acyl-L-alpha-aminoacyl-tRNA + H2O = an N-acyl-L-amino acid + a tRNA + H(+). In terms of biological role, essential peptidyl-tRNA hydrolase component of the mitochondrial large ribosomal subunit. Acts as a codon-independent translation release factor that has lost all stop codon specificity and directs the termination of translation in mitochondrion, possibly in case of abortive elongation. May be involved in the hydrolysis of peptidyl-tRNAs that have been prematurely terminated and thus in the recycling of stalled mitochondrial ribosomes. In Ailuropoda melanoleuca (Giant panda), this protein is Large ribosomal subunit protein mL62.